The sequence spans 447 residues: Bifunctional protein GlmU (447 aa).

A pyrophosphorylase region spans residues 1–225 (MLTVAILAAG…NGELQGINNR (225 aa)). UDP-N-acetyl-alpha-D-glucosamine-binding positions include 7 to 10 (LAAG), lysine 21, glutamine 73, and 78 to 79 (GT). Aspartate 103 is a Mg(2+) binding site. Glycine 140, glutamate 154, asparagine 169, and asparagine 223 together coordinate UDP-N-acetyl-alpha-D-glucosamine. Residue asparagine 223 coordinates Mg(2+). Residues 226–246 (VQLSKCEETIQNLIKEKHMLG) form a linker region. The interval 247-447 (GVTFINPASC…QVNIENWKKN (201 aa)) is N-acetyltransferase. UDP-N-acetyl-alpha-D-glucosamine contacts are provided by arginine 328 and lysine 346. Histidine 358 (proton acceptor) is an active-site residue. The UDP-N-acetyl-alpha-D-glucosamine site is built by tyrosine 361 and asparagine 372. Residues alanine 375, alanine 418, and arginine 435 each coordinate acetyl-CoA.

This sequence in the N-terminal section; belongs to the N-acetylglucosamine-1-phosphate uridyltransferase family. The protein in the C-terminal section; belongs to the transferase hexapeptide repeat family. In terms of assembly, homotrimer. Mg(2+) serves as cofactor.

The protein localises to the cytoplasm. The enzyme catalyses alpha-D-glucosamine 1-phosphate + acetyl-CoA = N-acetyl-alpha-D-glucosamine 1-phosphate + CoA + H(+). It catalyses the reaction N-acetyl-alpha-D-glucosamine 1-phosphate + UTP + H(+) = UDP-N-acetyl-alpha-D-glucosamine + diphosphate. It participates in nucleotide-sugar biosynthesis; UDP-N-acetyl-alpha-D-glucosamine biosynthesis; N-acetyl-alpha-D-glucosamine 1-phosphate from alpha-D-glucosamine 6-phosphate (route II): step 2/2. Its pathway is nucleotide-sugar biosynthesis; UDP-N-acetyl-alpha-D-glucosamine biosynthesis; UDP-N-acetyl-alpha-D-glucosamine from N-acetyl-alpha-D-glucosamine 1-phosphate: step 1/1. The protein operates within bacterial outer membrane biogenesis; LPS lipid A biosynthesis. Functionally, catalyzes the last two sequential reactions in the de novo biosynthetic pathway for UDP-N-acetylglucosamine (UDP-GlcNAc). The C-terminal domain catalyzes the transfer of acetyl group from acetyl coenzyme A to glucosamine-1-phosphate (GlcN-1-P) to produce N-acetylglucosamine-1-phosphate (GlcNAc-1-P), which is converted into UDP-GlcNAc by the transfer of uridine 5-monophosphate (from uridine 5-triphosphate), a reaction catalyzed by the N-terminal domain. This is Bifunctional protein GlmU from Prochlorococcus marinus (strain MIT 9515).